A 436-amino-acid polypeptide reads, in one-letter code: NADH-quinone oxidoreductase subunit D 1 (436 aa).

The protein belongs to the complex I 49 kDa subunit family. NDH-1 is composed of 14 different subunits. Subunits NuoB, C, D, E, F, and G constitute the peripheral sector of the complex.

It is found in the cell inner membrane. It carries out the reaction a quinone + NADH + 5 H(+)(in) = a quinol + NAD(+) + 4 H(+)(out). In terms of biological role, NDH-1 shuttles electrons from NADH, via FMN and iron-sulfur (Fe-S) centers, to quinones in the respiratory chain. The immediate electron acceptor for the enzyme in this species is believed to be ubiquinone. Couples the redox reaction to proton translocation (for every two electrons transferred, four hydrogen ions are translocated across the cytoplasmic membrane), and thus conserves the redox energy in a proton gradient. The polypeptide is NADH-quinone oxidoreductase subunit D 1 (Stenotrophomonas maltophilia (strain R551-3)).